The sequence spans 313 residues: Protein FixB (313 aa).

Position 255–283 (255–283 (LYLAVGISGQIQHMVGANASQTIFAINKD)) interacts with FAD.

It belongs to the ETF alpha-subunit/FixB family. As to quaternary structure, heterodimer of FixA and FixB.

It participates in amine and polyamine metabolism; carnitine metabolism. Required for anaerobic carnitine reduction. May bring reductant to CaiA. This is Protein FixB from Escherichia coli O17:K52:H18 (strain UMN026 / ExPEC).